Here is a 126-residue protein sequence, read N- to C-terminus: Ribosome-binding factor A (126 aa).

The protein belongs to the RbfA family. Monomer. Binds 30S ribosomal subunits, but not 50S ribosomal subunits or 70S ribosomes.

The protein resides in the cytoplasm. Functionally, one of several proteins that assist in the late maturation steps of the functional core of the 30S ribosomal subunit. Associates with free 30S ribosomal subunits (but not with 30S subunits that are part of 70S ribosomes or polysomes). Required for efficient processing of 16S rRNA. May interact with the 5'-terminal helix region of 16S rRNA. In Thermosynechococcus vestitus (strain NIES-2133 / IAM M-273 / BP-1), this protein is Ribosome-binding factor A.